A 350-amino-acid chain; its full sequence is Nicotinate-nucleotide--dimethylbenzimidazole phosphoribosyltransferase (350 aa).

The active-site Proton acceptor is the E317.

The protein belongs to the CobT family.

The enzyme catalyses 5,6-dimethylbenzimidazole + nicotinate beta-D-ribonucleotide = alpha-ribazole 5'-phosphate + nicotinate + H(+). The protein operates within nucleoside biosynthesis; alpha-ribazole biosynthesis; alpha-ribazole from 5,6-dimethylbenzimidazole: step 1/2. Functionally, catalyzes the synthesis of alpha-ribazole-5'-phosphate from nicotinate mononucleotide (NAMN) and 5,6-dimethylbenzimidazole (DMB). In Shewanella sp. (strain MR-7), this protein is Nicotinate-nucleotide--dimethylbenzimidazole phosphoribosyltransferase.